Here is a 1047-residue protein sequence, read N- to C-terminus: Ribonucleoside-diphosphate reductase subunit alpha (1047 aa).

ATP-cone domains lie at 9–111, 118–219, and 237–327; these read CTIV…KAHR, LSVV…ARVR, and VEVL…EALG. Substrate is bound by residues T442, 457–458, G486, 670–674, and 857–861; these read SC, NLCTE, and PTATI. A disulfide bridge links C458 with C687. Catalysis depends on N670, which acts as the Proton acceptor. C672 acts as the Cysteine radical intermediate in catalysis. Residue E674 is the Proton acceptor of the active site.

It belongs to the ribonucleoside diphosphate reductase large chain family. Tetramer of two alpha and two beta subunits.

The catalysed reaction is a 2'-deoxyribonucleoside 5'-diphosphate + [thioredoxin]-disulfide + H2O = a ribonucleoside 5'-diphosphate + [thioredoxin]-dithiol. Its activity is regulated as follows. Under complex allosteric control mediated by deoxynucleoside triphosphates and ATP binding. The type of nucleotide bound at the specificity site determines substrate preference. It seems probable that ATP makes the enzyme reduce CDP and UDP, dGTP favors ADP reduction and dTTP favors GDP reduction. Provides the precursors necessary for DNA synthesis. Catalyzes the biosynthesis of deoxyribonucleotides from the corresponding ribonucleotides. In Chlamydia trachomatis serovar D (strain ATCC VR-885 / DSM 19411 / UW-3/Cx), this protein is Ribonucleoside-diphosphate reductase subunit alpha (nrdA).